Consider the following 308-residue polypeptide: Glutaminase (308 aa).

Substrate is bound by residues S66, N117, E161, N168, Y192, Y244, and V262.

Belongs to the glutaminase family. Homotetramer.

It catalyses the reaction L-glutamine + H2O = L-glutamate + NH4(+). The sequence is that of Glutaminase from Salmonella choleraesuis (strain SC-B67).